Reading from the N-terminus, the 305-residue chain is Transmembrane epididymal protein 1 (305 aa).

The chain crosses the membrane as a helical span at residues 4–24 (FIGHISPGLFLVFYGLYQAII). N-linked (GlcNAc...) asparagine glycosylation occurs at N32. A run of 6 helical transmembrane segments spans residues 51–71 (LWQI…LIVY), 100–120 (LTMF…RSVL), 124–144 (LVLL…LLLV), 159–179 (SLLI…LWAP), 187–207 (IETF…FILF), and 223–243 (IMLV…CMLG). The interval 285–305 (EQQDRDDQAPLLSKSSPCDRA) is disordered.

Belongs to the TMEM45 family.

Its subcellular location is the membrane. This is Transmembrane epididymal protein 1 (Teddm1) from Rattus norvegicus (Rat).